A 132-amino-acid polypeptide reads, in one-letter code: ATP synthase epsilon chain (132 aa).

This sequence belongs to the ATPase epsilon chain family. In terms of assembly, F-type ATPases have 2 components, CF(1) - the catalytic core - and CF(0) - the membrane proton channel. CF(1) has five subunits: alpha(3), beta(3), gamma(1), delta(1), epsilon(1). CF(0) has three main subunits: a, b and c.

Its subcellular location is the cell inner membrane. In terms of biological role, produces ATP from ADP in the presence of a proton gradient across the membrane. This is ATP synthase epsilon chain from Anaeromyxobacter sp. (strain K).